We begin with the raw amino-acid sequence, 46 residues long: Endochitinase 4 (46 aa).

Belongs to the glycosyl hydrolase 19 family. Chitinase class I subfamily.

The enzyme catalyses Random endo-hydrolysis of N-acetyl-beta-D-glucosaminide (1-&gt;4)-beta-linkages in chitin and chitodextrins.. Its function is as follows. Defense against chitin-containing fungal and bacterial pathogens. In Arachis hypogaea (Peanut), this protein is Endochitinase 4.